Consider the following 401-residue polypeptide: MARPDLHERISSLRKLRVAQERVRVRRQVGRRDGVRLEIDGRWLTGFCSNDYLGLSQQFEVVAALQDAAARDGAGATASHLICGHHTAHETLERDIAEWLGYPSALLFGSGFIANLAVQQALLSEEDDVCVQDRLNHASLLDATRLAGCRLRRYPHLDVEGAMRQLKGAPEGAAMLASDGVFSMDGDVAPLRALSLVARMQEALFYVDDAHGVGVLGPQGRGCVADAGLGVAEVPLQLVTLGKALGGYGAVVVGEEALIRHLAETARPYIYTTALPPAQVAATLAAVRLARRDDWRRTRLTELIGTFRDGARRHGFELMASDTPIQPLLCGEEATVMAMSAALEQAGFLVGAIRPPTVPEGKARLRVTLSALHTPQQVQALVDAIVQARDVVSRQPQRALA.

Arginine 24 contacts substrate. A pyridoxal 5'-phosphate-binding site is contributed by 111-112; sequence GF. Residue histidine 137 participates in substrate binding. Pyridoxal 5'-phosphate-binding residues include serine 183, histidine 211, and threonine 240. Lysine 243 carries the N6-(pyridoxal phosphate)lysine modification. Threonine 357 is a binding site for substrate.

The protein belongs to the class-II pyridoxal-phosphate-dependent aminotransferase family. BioF subfamily. In terms of assembly, homodimer. Requires pyridoxal 5'-phosphate as cofactor.

The catalysed reaction is 6-carboxyhexanoyl-[ACP] + L-alanine + H(+) = (8S)-8-amino-7-oxononanoate + holo-[ACP] + CO2. It functions in the pathway cofactor biosynthesis; biotin biosynthesis. Its function is as follows. Catalyzes the decarboxylative condensation of pimeloyl-[acyl-carrier protein] and L-alanine to produce 8-amino-7-oxononanoate (AON), [acyl-carrier protein], and carbon dioxide. This is 8-amino-7-oxononanoate synthase from Xanthomonas campestris pv. campestris (strain B100).